We begin with the raw amino-acid sequence, 427 residues long: Glucose-6-phosphate isomerase (427 aa).

Residue glutamate 281 is the Proton donor of the active site. Active-site residues include histidine 302 and lysine 417.

Belongs to the GPI family.

It is found in the cytoplasm. The enzyme catalyses alpha-D-glucose 6-phosphate = beta-D-fructose 6-phosphate. The protein operates within carbohydrate biosynthesis; gluconeogenesis. It functions in the pathway carbohydrate degradation; glycolysis; D-glyceraldehyde 3-phosphate and glycerone phosphate from D-glucose: step 2/4. Catalyzes the reversible isomerization of glucose-6-phosphate to fructose-6-phosphate. This is Glucose-6-phosphate isomerase from Mycoplasmopsis pulmonis (strain UAB CTIP) (Mycoplasma pulmonis).